A 501-amino-acid polypeptide reads, in one-letter code: Melianol synthase CYP71BQ5 (501 aa).

A helical membrane pass occupies residues 1 to 21; that stretch reads MEFRLPVLLSFLLFFLMLVRH. Cys-439 lines the heme pocket.

Belongs to the cytochrome P450 family. It depends on heme as a cofactor. As to expression, mainly expressed in petioles and roots, and, to a lower extent, in leaves.

Its subcellular location is the membrane. The enzyme catalyses dihydroniloticin + 2 reduced [NADPH--hemoprotein reductase] + 2 O2 = melianol + 2 oxidized [NADPH--hemoprotein reductase] + 3 H2O + 2 H(+). It participates in secondary metabolite biosynthesis; terpenoid biosynthesis. In terms of biological role, monooxygenase involved in the biosynthesis of limonoids triterpene natural products such as azadirachtin, an antifeedant widely used as bioinsecticide, and possessing many medicinal applications including anti-tumoral, anti-malarial, anti-rheumatic, antibacterial, anti-inflammatory, anti-pyretic and diuretic effects. Catalyzes the conversion of dihydroniloticin to the protolimonoid melianol. In Melia azedarach (Chinaberry tree), this protein is Melianol synthase CYP71BQ5.